A 432-amino-acid chain; its full sequence is Glutamate-1-semialdehyde 2,1-aminomutase 1 (432 aa).

At Lys272 the chain carries N6-(pyridoxal phosphate)lysine.

It belongs to the class-III pyridoxal-phosphate-dependent aminotransferase family. HemL subfamily. In terms of assembly, homodimer. Requires pyridoxal 5'-phosphate as cofactor.

It localises to the cytoplasm. It catalyses the reaction (S)-4-amino-5-oxopentanoate = 5-aminolevulinate. It participates in porphyrin-containing compound metabolism; protoporphyrin-IX biosynthesis; 5-aminolevulinate from L-glutamyl-tRNA(Glu): step 2/2. The chain is Glutamate-1-semialdehyde 2,1-aminomutase 1 from Exiguobacterium sibiricum (strain DSM 17290 / CCUG 55495 / CIP 109462 / JCM 13490 / 255-15).